Reading from the N-terminus, the 251-residue chain is Protein phosphatase 1 regulatory subunit 35 (251 aa).

Disordered stretches follow at residues 58-99 and 180-235; these read LITV…QQTH and PALA…VPRP. Residues 76–99 are compositionally biased toward basic and acidic residues; sequence PNKDEHGVETDREQSRECDGQQTH.

It belongs to the PPP1R35 family.

It is found in the cytoplasm. Its subcellular location is the cytoskeleton. The protein localises to the microtubule organizing center. It localises to the centrosome. The protein resides in the centriole. In terms of biological role, during centriole duplication, may play a role in the centriole elongation by promoting the recruitment of the microtubule-binding elongation machinery, leading to the centriole to centrosome conversion. In addition may play a role in the primary cilia assembly. In Danio rerio (Zebrafish), this protein is Protein phosphatase 1 regulatory subunit 35.